The primary structure comprises 853 residues: DNA mismatch repair protein MutS (853 aa).

614–621 (GPNMGGKS) serves as a coordination point for ATP.

This sequence belongs to the DNA mismatch repair MutS family.

In terms of biological role, this protein is involved in the repair of mismatches in DNA. It is possible that it carries out the mismatch recognition step. This protein has a weak ATPase activity. In Escherichia coli O6:K15:H31 (strain 536 / UPEC), this protein is DNA mismatch repair protein MutS.